We begin with the raw amino-acid sequence, 671 residues long: Protein cereblon (671 aa).

The span at 1–11 (MDGEEAADIDE) shows a compositional bias: acidic residues. 3 disordered regions span residues 1 to 59 (MDGE…VDGD), 104 to 130 (LTGT…PAQP), and 150 to 187 (GHNV…DAEA). Composition is skewed to low complexity over residues 39–51 (QQQQ…SSGE) and 105–115 (TGTTTPTPTAP). Residues 162 to 173 (SISSRHSGSDMS) show a composition bias toward polar residues. A Lon N-terminal domain is found at 309–537 (RMLIFMHQHI…IIGSTLKQES (229 aa)). Residues 536–645 (ESLFYCRYCN…LAGSSVRIGK (110 aa)) form the CULT domain. 4 residues coordinate Zn(2+): Cys541, Cys544, Cys610, and Cys613.

Belongs to the CRBN family. In terms of assembly, likely a component of a DCX (DDB1-CUL4-X-box) protein ligase complex. May interact with pic/DDB1. In terms of processing, ubiquitinated.

It is found in the nucleus. It participates in protein modification; protein ubiquitination. Functionally, substrate recognition component of a DCX (DDB1-CUL4-X-box) E3 protein ligase complex that mediates the ubiquitination and subsequent proteasomal degradation of target proteins. Has an essential role in mediating growth by negatively regulating insulin signaling. It also has a role in maintaining presynaptic function in the neuromuscular junction synapses of third-instar larvae. The polypeptide is Protein cereblon (Drosophila grimshawi (Hawaiian fruit fly)).